Consider the following 269-residue polypeptide: 15-hydroxyprostaglandin dehydrogenase [NAD(+)] (269 aa).

NAD(+) contacts are provided by residues 12–20 (GAAQGIGKA), 36–37 (DW), 63–65 (CDV), and Asn-91. Substrate-binding residues include Ser-138 and Gln-148. Tyr-151 functions as the Proton acceptor in the catalytic mechanism. Residues 151–155 (YCASK) and 186–188 (VDT) each bind NAD(+).

This sequence belongs to the short-chain dehydrogenases/reductases (SDR) family. As to quaternary structure, homodimer. In terms of tissue distribution, expressed in proximal convoluted tubules of the kidney, where it colocalizes with the prostaglandin transporter SLC22A22 (at protein level). Expressed in lung, intestine, stomach and liver.

It is found in the cytoplasm. It carries out the reaction prostaglandin E2 + NAD(+) = 15-oxoprostaglandin E2 + NADH + H(+). The catalysed reaction is (15S)-hydroxy-(5Z,8Z,11Z,13E)-eicosatetraenoate + NAD(+) = 15-oxo-(5Z,8Z,11Z,13E)-eicosatetraenoate + NADH + H(+). It catalyses the reaction (11R)-hydroxy-(5Z,8Z,12E,14Z)-eicosatetraenoate + NAD(+) = 11-oxo-(5Z,8Z,12E,14Z)-eicosatetraenoate + NADH + H(+). The enzyme catalyses lipoxin A4 + NAD(+) = 15-oxo-(5S,6R)-dihydroxy-(7E,9E,11Z,13E)-eicosatetraenoate + NADH + H(+). It carries out the reaction 15-oxo-(5S,6R)-dihydroxy-(7E,9E,11Z)-eicosatrienoate + NADH + H(+) = (5S,6R,15S)-trihydroxy-(7E,9E,11Z)-eicosatrienoate + NAD(+). The catalysed reaction is prostaglandin A1 + NAD(+) = 15-oxo-prostaglandin A1 + NADH + H(+). It catalyses the reaction prostaglandin E1 + NAD(+) = 15-oxoprostaglandin E1 + NADH + H(+). The enzyme catalyses 14-hydroxy-(4Z,7Z,10Z,12E,16Z,19Z)-docosahexaenoate + NAD(+) = 14-oxo-(4Z,7Z,10Z,12E,16Z,19Z)-docosahexaenoate + NADH + H(+). It carries out the reaction resolvin E1 + NAD(+) = 18-oxo-resolvin E1 + NADH + H(+). The catalysed reaction is resolvin D1 + NAD(+) = 8-oxoresolvin D1 + NADH + H(+). It catalyses the reaction resolvin D1 + NAD(+) = 17-oxoresolvin D1 + NADH + H(+). The enzyme catalyses resolvin D2 + NAD(+) = 7-oxoresolvin D2 + NADH + H(+). It carries out the reaction resolvin D2 + NAD(+) = 16-oxoresolvin D2 + NADH + H(+). Catalyzes the NAD-dependent dehydrogenation (oxidation) of a broad array of hydroxylated polyunsaturated fatty acids (mainly eicosanoids and docosanoids, including prostaglandins, lipoxins and resolvins), yielding their corresponding keto (oxo) metabolites. Decreases the levels of the pro-proliferative prostaglandins such as prostaglandin E2 (whose activity is increased in cancer because of an increase in the expression of cyclooxygenase 2) and generates oxo-fatty acid products that can profoundly influence cell function by abrogating pro-inflammatory cytokine expression. Converts resolvins E1, D1 and D2 to their oxo products, which represents a mode of resolvin inactivation. Resolvin E1 plays important roles during the resolution phase of acute inflammation, while resolvins D1 and D2 have a unique role in obesity-induced adipose inflammation. This chain is 15-hydroxyprostaglandin dehydrogenase [NAD(+)] (Hpgd), found in Mus musculus (Mouse).